The primary structure comprises 327 residues: ATP-dependent 6-phosphofructokinase (327 aa).

ATP is bound by residues Gly12, 73-74, and 103-106; these read RL and GDGS. Residue Asp104 participates in Mg(2+) binding. 126–128 contacts substrate; the sequence is TID. Residue Asp128 is the Proton acceptor of the active site. Arg155 serves as a coordination point for ADP. Substrate-binding positions include Arg163 and 170–172; that span reads MGH. Residues 186 to 188 and 214 to 216 each bind ADP; these read GAD and KRS. Residues Glu223, Arg245, and 251-254 each bind substrate; that span reads HTQR.

It belongs to the phosphofructokinase type A (PFKA) family. ATP-dependent PFK group I subfamily. Prokaryotic clade 'B1' sub-subfamily. As to quaternary structure, homotetramer. Mg(2+) serves as cofactor.

It localises to the cytoplasm. It catalyses the reaction beta-D-fructose 6-phosphate + ATP = beta-D-fructose 1,6-bisphosphate + ADP + H(+). Its pathway is carbohydrate degradation; glycolysis; D-glyceraldehyde 3-phosphate and glycerone phosphate from D-glucose: step 3/4. Its activity is regulated as follows. Allosterically activated by ADP and other diphosphonucleosides, and allosterically inhibited by phosphoenolpyruvate. Its function is as follows. Catalyzes the phosphorylation of D-fructose 6-phosphate to fructose 1,6-bisphosphate by ATP, the first committing step of glycolysis. The protein is ATP-dependent 6-phosphofructokinase of Spiroplasma citri.